The following is a 66-amino-acid chain: ATP synthase protein 8 (66 aa).

The helical transmembrane segment at 8–24 (PWPMVIMSMILTLFYIT) threads the bilayer. Residue Lys54 is modified to N6-acetyllysine; alternate. Lys54 bears the N6-succinyllysine; alternate mark. Position 57 is an N6-acetyllysine (Lys57).

The protein belongs to the ATPase protein 8 family. In terms of assembly, F-type ATPases have 2 components, CF(1) - the catalytic core - and CF(0) - the membrane proton channel. Component of an ATP synthase complex composed of ATP5PB, ATP5MC1, ATP5F1E, ATP5PD, ATP5ME, ATP5PF, ATP5MF, MT-ATP6, MT-ATP8, ATP5F1A, ATP5F1B, ATP5F1D, ATP5F1C, ATP5PO, ATP5MG, ATP5MK and ATP5MJ. Interacts with PRICKLE3.

It localises to the mitochondrion membrane. In terms of biological role, mitochondrial membrane ATP synthase (F(1)F(0) ATP synthase or Complex V) produces ATP from ADP in the presence of a proton gradient across the membrane which is generated by electron transport complexes of the respiratory chain. F-type ATPases consist of two structural domains, F(1) - containing the extramembraneous catalytic core and F(0) - containing the membrane proton channel, linked together by a central stalk and a peripheral stalk. During catalysis, ATP synthesis in the catalytic domain of F(1) is coupled via a rotary mechanism of the central stalk subunits to proton translocation. Part of the complex F(0) domain. Minor subunit located with subunit a in the membrane. The chain is ATP synthase protein 8 (MT-ATP8) from Alouatta sara (Bolivian red howler monkey).